Reading from the N-terminus, the 349-residue chain is tRNA pseudouridine synthase D (349 aa).

Phenylalanine 27 provides a ligand contact to substrate. Aspartate 80 serves as the catalytic Nucleophile. Asparagine 129 is a substrate binding site. The TRUD domain maps to 155–303 (GVPNYFGAQR…VEAARRAMLL (149 aa)). Phenylalanine 329 provides a ligand contact to substrate.

Belongs to the pseudouridine synthase TruD family.

The catalysed reaction is uridine(13) in tRNA = pseudouridine(13) in tRNA. Responsible for synthesis of pseudouridine from uracil-13 in transfer RNAs. The protein is tRNA pseudouridine synthase D of Shigella boydii serotype 4 (strain Sb227).